The primary structure comprises 517 residues: Crotonobetaine/carnitine--CoA ligase (517 aa).

Belongs to the ATP-dependent AMP-binding enzyme family.

The catalysed reaction is 4-(trimethylamino)butanoate + ATP + CoA = 4-(trimethylamino)butanoyl-CoA + AMP + diphosphate. The enzyme catalyses crotonobetaine + ATP + CoA = crotonobetainyl-CoA + AMP + diphosphate. It carries out the reaction (R)-carnitine + ATP + CoA = (R)-carnitinyl-CoA + AMP + diphosphate. It functions in the pathway amine and polyamine metabolism; carnitine metabolism. In terms of biological role, catalyzes the transfer of CoA to carnitine, generating the initial carnitinyl-CoA needed for the CaiB reaction cycle. Also has activity toward crotonobetaine and gamma-butyrobetaine. This is Crotonobetaine/carnitine--CoA ligase from Escherichia coli O127:H6 (strain E2348/69 / EPEC).